We begin with the raw amino-acid sequence, 328 residues long: Tetraacyldisaccharide 4'-kinase (328 aa).

55–62 (TAGGNGKT) provides a ligand contact to ATP.

The protein belongs to the LpxK family.

The catalysed reaction is a lipid A disaccharide + ATP = a lipid IVA + ADP + H(+). It participates in glycolipid biosynthesis; lipid IV(A) biosynthesis; lipid IV(A) from (3R)-3-hydroxytetradecanoyl-[acyl-carrier-protein] and UDP-N-acetyl-alpha-D-glucosamine: step 6/6. Functionally, transfers the gamma-phosphate of ATP to the 4'-position of a tetraacyldisaccharide 1-phosphate intermediate (termed DS-1-P) to form tetraacyldisaccharide 1,4'-bis-phosphate (lipid IVA). This Yersinia enterocolitica serotype O:8 / biotype 1B (strain NCTC 13174 / 8081) protein is Tetraacyldisaccharide 4'-kinase.